Here is a 346-residue protein sequence, read N- to C-terminus: tRNA N6-adenosine threonylcarbamoyltransferase (346 aa).

Fe cation is bound by residues His-117 and His-121. Substrate is bound by residues 139–143, Asp-172, Gly-185, Asp-189, and Asn-278; that span reads QVSGG. Asp-308 is a binding site for Fe cation.

Belongs to the KAE1 / TsaD family. Requires Fe(2+) as cofactor.

It localises to the cytoplasm. It carries out the reaction L-threonylcarbamoyladenylate + adenosine(37) in tRNA = N(6)-L-threonylcarbamoyladenosine(37) in tRNA + AMP + H(+). Its function is as follows. Required for the formation of a threonylcarbamoyl group on adenosine at position 37 (t(6)A37) in tRNAs that read codons beginning with adenine. Is involved in the transfer of the threonylcarbamoyl moiety of threonylcarbamoyl-AMP (TC-AMP) to the N6 group of A37, together with TsaE and TsaB. TsaD likely plays a direct catalytic role in this reaction. This chain is tRNA N6-adenosine threonylcarbamoyltransferase, found in Lactobacillus delbrueckii subsp. bulgaricus (strain ATCC 11842 / DSM 20081 / BCRC 10696 / JCM 1002 / NBRC 13953 / NCIMB 11778 / NCTC 12712 / WDCM 00102 / Lb 14).